A 93-amino-acid polypeptide reads, in one-letter code: Putative ribosomal protein eL43-like (93 aa).

The segment at 40-61 (CSFCGKTKMKRRAVKIRHCNSC) adopts a C4-type zinc-finger fold.

Belongs to the eukaryotic ribosomal protein eL43 family.

The polypeptide is Putative ribosomal protein eL43-like (RPL37AP8) (Homo sapiens (Human)).